A 174-amino-acid chain; its full sequence is Thioredoxin O, mitochondrial (174 aa).

A mitochondrion-targeting transit peptide spans 1–59; sequence MALAHRLCRLPRLLPLAAAAAASKPYLPGKPSPAPPPPLSSPPPFPSLSRLFSTTPSSS. The 113-residue stretch at 60 to 172 folds into the Thioredoxin domain; that stretch reads GDSSMVVVGS…LESTMESLHK (113 aa). Active-site nucleophile residues include Cys96 and Cys99. An intrachain disulfide couples Cys96 to Cys99.

The protein belongs to the thioredoxin family. Plant O-type subfamily.

The protein resides in the mitochondrion. In terms of biological role, probable thiol-disulfide oxidoreductase that may participate in various redox reactions. The sequence is that of Thioredoxin O, mitochondrial from Oryza sativa subsp. japonica (Rice).